Reading from the N-terminus, the 248-residue chain is Ribosomal RNA small subunit methyltransferase J (248 aa).

S-adenosyl-L-methionine is bound by residues 97 to 98 (RD), 113 to 114 (ER), and Asp-167.

The protein belongs to the methyltransferase superfamily. RsmJ family.

The protein resides in the cytoplasm. It carries out the reaction guanosine(1516) in 16S rRNA + S-adenosyl-L-methionine = N(2)-methylguanosine(1516) in 16S rRNA + S-adenosyl-L-homocysteine + H(+). Specifically methylates the guanosine in position 1516 of 16S rRNA. This Aeromonas hydrophila subsp. hydrophila (strain ATCC 7966 / DSM 30187 / BCRC 13018 / CCUG 14551 / JCM 1027 / KCTC 2358 / NCIMB 9240 / NCTC 8049) protein is Ribosomal RNA small subunit methyltransferase J.